We begin with the raw amino-acid sequence, 517 residues long: GMP synthase [glutamine-hydrolyzing] (517 aa).

One can recognise a Glutamine amidotransferase type-1 domain in the interval 9-199 (RILILDFGSQ…VLNVCGCEGL (191 aa)). Cys-86 acts as the Nucleophile in catalysis. Active-site residues include His-173 and Glu-175. Residues 200–392 (WTSASIIEDA…LGLPYNMLYR (193 aa)) enclose the GMPS ATP-PPase domain. 227 to 233 (SGGVDSS) provides a ligand contact to ATP.

Homodimer.

It carries out the reaction XMP + L-glutamine + ATP + H2O = GMP + L-glutamate + AMP + diphosphate + 2 H(+). Its pathway is purine metabolism; GMP biosynthesis; GMP from XMP (L-Gln route): step 1/1. Its function is as follows. Catalyzes the synthesis of GMP from XMP. The chain is GMP synthase [glutamine-hydrolyzing] from Aliivibrio salmonicida (strain LFI1238) (Vibrio salmonicida (strain LFI1238)).